Reading from the N-terminus, the 513-residue chain is Putative ribose/galactose/methyl galactoside import ATP-binding protein (513 aa).

ABC transporter domains follow at residues 24–260 and 270–510; these read LSAE…VGRE and VPIG…VMEL. 56–63 lines the ATP pocket; it reads GENGAGKS.

The protein belongs to the ABC transporter superfamily. Carbohydrate importer 2 (CUT2) (TC 3.A.1.2) family.

It localises to the cell inner membrane. The catalysed reaction is D-ribose(out) + ATP + H2O = D-ribose(in) + ADP + phosphate + H(+). It carries out the reaction D-galactose(out) + ATP + H2O = D-galactose(in) + ADP + phosphate + H(+). Functionally, part of an ABC transporter complex involved in carbohydrate import. Could be involved in ribose, galactose and/or methyl galactoside import. Responsible for energy coupling to the transport system. This Rhizobium johnstonii (strain DSM 114642 / LMG 32736 / 3841) (Rhizobium leguminosarum bv. viciae) protein is Putative ribose/galactose/methyl galactoside import ATP-binding protein.